The primary structure comprises 496 residues: RNA-binding motif protein, Y chromosome, family 1 member D (496 aa).

The RRM domain occupies 8-85 (GKLFIGGLNR…KAIKVEQAKK (78 aa)). 2 disordered regions span residues 67-349 (DMNG…HRDY) and 452-496 (KDQR…SSRY). Low complexity-rich tracts occupy residues 97 to 114 (PASS…SARG) and 149 to 159 (PVKRGPSSRSG). Positions 175–184 (NSWMGSQGPM) are enriched in polar residues. Composition is skewed to basic and acidic residues over residues 204 to 214 (RNDRMSTRHDG), 242 to 253 (DNGHSNRDEHSS), 276 to 289 (AYRD…DESY), 313 to 326 (GYRD…HESY), 335 to 349 (SSRE…HRDY), and 484 to 496 (GESR…SSRY).

In terms of assembly, interacts with splicing factor proteins SFRS3/SRP20, TRA2B/SFRS10, KHDRBS1/SAM68 and KHDRBS3. Testis-specific.

The protein resides in the nucleus. Functionally, RNA-binding protein which may be involved in spermatogenesis. Required for sperm development, possibly by participating in pre-mRNA splicing in the testis. This chain is RNA-binding motif protein, Y chromosome, family 1 member D (RBMY1D), found in Homo sapiens (Human).